The chain runs to 247 residues: MQVEAHLQKIIDQEGKVHLTLIDPASQTPERAAEIALAAVKGGTDAIMIGGSTGASGTLLDETVIKIKEKVDVPTILFPGSSAGLSRYADAVFFMSLLNSRDLGYVITNQVMGAPLVYQSQIEPISMAYLIVEPGGTVGWVGDAKLIPRKKPELAAVYALAGKYLGMHYTYLEAGSGADKPINPEMIGAVKKVLGENKLIVGGGIRDAEAAKLCASAGADMIVTGTVLEEVRDVTAKVAELVSAIKR.

Mg(2+) contacts are provided by Asp23 and Ser52. Residues 171–177, 203–204, and 225–226 each bind sn-glycerol 1-phosphate; these read YLEAGSG, GG, and GT.

This sequence belongs to the GGGP/HepGP synthase family. Group II subfamily. Mg(2+) serves as cofactor.

The protein resides in the cytoplasm. The enzyme catalyses sn-glycerol 1-phosphate + (2E,6E,10E)-geranylgeranyl diphosphate = sn-3-O-(geranylgeranyl)glycerol 1-phosphate + diphosphate. It functions in the pathway membrane lipid metabolism; glycerophospholipid metabolism. Functionally, prenyltransferase that catalyzes the transfer of the geranylgeranyl moiety of geranylgeranyl diphosphate (GGPP) to the C3 hydroxyl of sn-glycerol-1-phosphate (G1P). This reaction is the first ether-bond-formation step in the biosynthesis of archaeal membrane lipids. This chain is Geranylgeranylglyceryl phosphate synthase, found in Methanosarcina barkeri (strain Fusaro / DSM 804).